We begin with the raw amino-acid sequence, 103 residues long: Large ribosomal subunit protein eL42 (103 aa).

2 residues coordinate Zn(2+): C18 and C21. The C4-type zinc-finger motif lies at 18 to 81 (CPKCRTHTEH…TVLKLKCSKC (64 aa)). The segment at 40–62 (LSEGERRYARKKKGYGSKRKPEQ) is disordered. The segment covering 47 to 57 (YARKKKGYGSK) has biased composition (basic residues). Residues C78 and C81 each coordinate Zn(2+).

Belongs to the eukaryotic ribosomal protein eL42 family. Part of the 50S ribosomal subunit. It depends on Zn(2+) as a cofactor.

Binds to the 23S rRNA. The polypeptide is Large ribosomal subunit protein eL42 (Desulfurococcus amylolyticus (strain DSM 18924 / JCM 16383 / VKM B-2413 / 1221n) (Desulfurococcus kamchatkensis)).